A 327-amino-acid polypeptide reads, in one-letter code: tRNA uridine(34) hydroxylase (327 aa).

Residues 123–217 (SDPEVLLVDT…YLEEVKQEES (95 aa)) form the Rhodanese domain. Catalysis depends on Cys177, which acts as the Cysteine persulfide intermediate.

Belongs to the TrhO family.

The catalysed reaction is uridine(34) in tRNA + AH2 + O2 = 5-hydroxyuridine(34) in tRNA + A + H2O. Functionally, catalyzes oxygen-dependent 5-hydroxyuridine (ho5U) modification at position 34 in tRNAs. The protein is tRNA uridine(34) hydroxylase of Shewanella piezotolerans (strain WP3 / JCM 13877).